The following is a 146-amino-acid chain: Leghemoglobin Lb120-34 (146 aa).

The 145-residue stretch at 2-146 (GFTEKQEALV…LASAIKKAMN (145 aa)) folds into the Globin domain. Tyrosine 24 and tyrosine 29 each carry nitrated tyrosine. Serine 44 provides a ligand contact to heme b. A Phosphoserine modification is found at serine 44. Histidine 61 is a binding site for O2. Residues lysine 64, histidine 93, and lysine 96 each coordinate heme b. Residue tyrosine 134 is modified to Nitrated tyrosine.

The protein belongs to the plant globin family. Monomer. In terms of processing, nitrated in effective nodules and particularly in hypoxic conditions; this mechanism may play a protective role in the symbiosis by buffering toxic peroxynitrite NO(2)(-). Nitration level decrease during nodule senescence. Post-translationally, phosphorylation at Ser-44 disrupts the molecular environment of its porphyrin ring oxygen binding pocket, thus leading to a reduced oxygen consumption and to the delivery of oxygen O(2) to symbiosomes. As to expression, root nodules.

It localises to the cytoplasm. Its subcellular location is the cytosol. It is found in the nucleus. In terms of biological role, leghemoglobin that reversibly binds oxygen O(2) through a pentacoordinated heme iron. In root nodules, facilitates the diffusion of oxygen to the bacteroids while preventing the bacterial nitrogenase from being inactivated by buffering dioxygen, nitric oxide and carbon monoxide, and promoting the formation of reactive oxygen species (ROS, e.g. H(2)O(2)). This role is essential for symbiotic nitrogen fixation (SNF). In Pisum sativum (Garden pea), this protein is Leghemoglobin Lb120-34.